The following is a 60-amino-acid chain: uncharacterized protein (60 aa).

This is an uncharacterized protein from Saccharomyces cerevisiae (strain ATCC 204508 / S288c) (Baker's yeast).